The chain runs to 693 residues: Zinc finger BED domain-containing protein 5 (693 aa).

The BED-type zinc finger occupies 108-164; sequence RKYDESYLSFGFTYFGNRDAPHAQCVLCKKILSNSSLAPSKLRRHLETKHAAYKDKD. Positions 132, 135, 152, and 157 each coordinate Zn(2+).

The chain is Zinc finger BED domain-containing protein 5 (ZBED5) from Homo sapiens (Human).